A 54-amino-acid polypeptide reads, in one-letter code: uncharacterized protein (54 aa).

This is an uncharacterized protein from Haemophilus influenzae (strain ATCC 51907 / DSM 11121 / KW20 / Rd).